A 307-amino-acid chain; its full sequence is Acetaldehyde dehydrogenase 1 (307 aa).

Catalysis depends on Cys-131, which acts as the Acyl-thioester intermediate. NAD(+)-binding positions include Ser-162–Asn-170 and Asn-273.

The protein belongs to the acetaldehyde dehydrogenase family.

It carries out the reaction acetaldehyde + NAD(+) + CoA = acetyl-CoA + NADH + H(+). This chain is Acetaldehyde dehydrogenase 1 (salG), found in Metapseudomonas furukawaii (Pseudomonas furukawaii).